Reading from the N-terminus, the 551-residue chain is Arginine--tRNA ligase (551 aa).

A 'HIGH' region motif is present at residues 123 to 133 (ANPTGPLTIGR).

The protein belongs to the class-I aminoacyl-tRNA synthetase family. In terms of assembly, monomer.

The protein resides in the cytoplasm. The enzyme catalyses tRNA(Arg) + L-arginine + ATP = L-arginyl-tRNA(Arg) + AMP + diphosphate. The sequence is that of Arginine--tRNA ligase from Prosthecochloris aestuarii (strain DSM 271 / SK 413).